The sequence spans 66 residues: Phylloseptin-S1 (66 aa).

The signal sequence occupies residues 1-22; sequence MAFLKKSLFLVLFLGLVSLSIC. A propeptide spanning residues 23 to 46 is cleaved from the precursor; that stretch reads EEEKRETEEEEHDQEEDDKSEEKR. Positions 25 to 44 are disordered; it reads EKRETEEEEHDQEEDDKSEE. Positions 30 to 41 are enriched in acidic residues; that stretch reads EEEEHDQEEDDK. The residue at position 65 (Phe65) is a Phenylalanine amide.

In terms of tissue distribution, expressed by the skin glands.

It localises to the secreted. The protein localises to the target cell membrane. In terms of biological role, antimicrobial peptide with high activity against Gram-positive bacteria, low activity against Gram-negative bacteria, and moderate activity against fungi. Acts on bacterial biofilms (S.aureus) with the same potency than on bacteria. Acts by causing bacterial membrane disruption inducing leakage of the intracellular content followed by cell death. It adopts an alpha-helical amphipathic structure in membrane environments. Also shows highly potent antiparasitic activity against Leishmania species. Shows low hemolytic activity on horse and human erythrocytes (LC(50)=39 uM). Is also active on human monocytes (IC(50)=23 uM). In Phyllomedusa sauvagei (Sauvage's leaf frog), this protein is Phylloseptin-S1.